The sequence spans 637 residues: DNA mismatch repair protein MutL (637 aa).

Positions 343 to 352 (QQSPDRQVSP) are enriched in polar residues. Residues 343-411 (QQSPDRQVSP…SARNGDVSLP (69 aa)) form a disordered region. A compositionally biased stretch (basic and acidic residues) spans 365 to 380 (SIERKPSVSYDVRDSH). Low complexity predominate over residues 388 to 397 (YSSGSSSYRS).

Belongs to the DNA mismatch repair MutL/HexB family.

This protein is involved in the repair of mismatches in DNA. It is required for dam-dependent methyl-directed DNA mismatch repair. May act as a 'molecular matchmaker', a protein that promotes the formation of a stable complex between two or more DNA-binding proteins in an ATP-dependent manner without itself being part of a final effector complex. This Shewanella halifaxensis (strain HAW-EB4) protein is DNA mismatch repair protein MutL.